A 49-amino-acid chain; its full sequence is DNA-directed RNA polymerase subunit Rpo12 (49 aa).

Residues C11, C27, and C30 each coordinate Zn(2+).

This sequence belongs to the archaeal Rpo12/eukaryotic RPC10 RNA polymerase subunit family. In terms of assembly, part of the RNA polymerase complex. It depends on Zn(2+) as a cofactor.

It localises to the cytoplasm. The enzyme catalyses RNA(n) + a ribonucleoside 5'-triphosphate = RNA(n+1) + diphosphate. Functionally, DNA-dependent RNA polymerase (RNAP) catalyzes the transcription of DNA into RNA using the four ribonucleoside triphosphates as substrates. The chain is DNA-directed RNA polymerase subunit Rpo12 from Thermococcus onnurineus (strain NA1).